The chain runs to 431 residues: MGKNVVVLGTQWGDEGKGKIVDLLTQDAQVVVRYQGGHNAGHTLKINGVKTVLRLIPSGMLRPNVTCYIANGVVLSPQALLSEIKELEGNGINVRERLRISLACPLILPYHIALDKARETHMGKSAIGTTGRGIGPAYEDKVARRALRVGDLFHRDRFANKLTELLDYHNFVLTQYFKQPAVDLESLLGESLQWAEELRPMVCDVSACLHEHRKQGENILFEGAQGVYLDIDHGTYPYVTSSNTCVGSVINGAGFGPRYIDYVLGITKAYTTRVGGGPFPTELLDDVGKRIAERGQEFGAVTGRPRRCGWFDAVLLKRSIELNSISGLCVTKLDVLDGLEVLRIAVAYKDRDGNILSRPPLAADDFNDLLPVYEELPGWQESTADVTVMSDLPANARAYLKRIEEILGIPIDMLSTGPERDSTITLRGPFL.

GTP contacts are provided by residues 13–19 (GDEGKGK) and 41–43 (GHT). The active-site Proton acceptor is Asp14. Mg(2+) contacts are provided by Asp14 and Gly41. IMP is bound by residues 14 to 17 (DEGK), 39 to 42 (NAGH), Thr130, Arg144, Gln225, Thr240, and Arg304. His42 serves as the catalytic Proton donor. Substrate is bound at residue 300–306 (AVTGRPR). GTP is bound by residues Arg306, 332 to 334 (KLD), and 415 to 417 (STG).

This sequence belongs to the adenylosuccinate synthetase family. In terms of assembly, homodimer. Requires Mg(2+) as cofactor.

Its subcellular location is the cytoplasm. It carries out the reaction IMP + L-aspartate + GTP = N(6)-(1,2-dicarboxyethyl)-AMP + GDP + phosphate + 2 H(+). It participates in purine metabolism; AMP biosynthesis via de novo pathway; AMP from IMP: step 1/2. Functionally, plays an important role in the de novo pathway of purine nucleotide biosynthesis. Catalyzes the first committed step in the biosynthesis of AMP from IMP. The chain is Adenylosuccinate synthetase from Legionella pneumophila subsp. pneumophila (strain Philadelphia 1 / ATCC 33152 / DSM 7513).